A 179-amino-acid polypeptide reads, in one-letter code: UPF0227 protein VP0969 (179 aa).

Belongs to the UPF0227 family.

This is UPF0227 protein VP0969 from Vibrio parahaemolyticus serotype O3:K6 (strain RIMD 2210633).